Here is a 237-residue protein sequence, read N- to C-terminus: Cyclic nucleotide phosphodiesterase inhibitor (237 aa).

An N-terminal signal peptide occupies residues 1 to 20; it reads MAKIIISLILLLSLFSFSYG. Asn28, Asn65, and Asn70 each carry an N-linked (GlcNAc...) asparagine glycan. Cys-rich CT repeat units lie at residues 57-81, 82-105, 116-139, 140-162, and 163-186; these read DLCH…CNDN, NPCT…CDPG, DPCT…CNDG, DACT…CDDN, and DPCT…CSIK. Asn153 carries an N-linked (GlcNAc...) asparagine glycan. Asn207 carries an N-linked (GlcNAc...) asparagine glycan.

Its function is as follows. PDI acts by binding stoichiometrically to cyclic nucleotide phosphodiesterase, changing the KM of the enzyme for cAMP from 10 uM to 2 mM. The sequence is that of Cyclic nucleotide phosphodiesterase inhibitor (pdiA) from Dictyostelium discoideum (Social amoeba).